The following is a 132-amino-acid chain: Large ribosomal subunit protein bL21 (132 aa).

Positions 111–132 (AAEKPARKPRAKKTNEVTTDGA) are disordered.

The protein belongs to the bacterial ribosomal protein bL21 family. As to quaternary structure, part of the 50S ribosomal subunit. Contacts protein L20.

Functionally, this protein binds to 23S rRNA in the presence of protein L20. This is Large ribosomal subunit protein bL21 from Dehalococcoides mccartyi (strain CBDB1).